Reading from the N-terminus, the 121-residue chain is uncharacterized protein (121 aa).

An N-terminal signal peptide occupies residues 1 to 19 (MKKFALATIFALATTSAFA).

It to E.coli YgiW.

It is found in the periplasm. This is an uncharacterized protein from Haemophilus influenzae (strain ATCC 51907 / DSM 11121 / KW20 / Rd).